The primary structure comprises 445 residues: Exodeoxyribonuclease 7 large subunit (445 aa).

The protein belongs to the XseA family. Heterooligomer composed of large and small subunits.

It localises to the cytoplasm. The enzyme catalyses Exonucleolytic cleavage in either 5'- to 3'- or 3'- to 5'-direction to yield nucleoside 5'-phosphates.. Its function is as follows. Bidirectionally degrades single-stranded DNA into large acid-insoluble oligonucleotides, which are then degraded further into small acid-soluble oligonucleotides. The chain is Exodeoxyribonuclease 7 large subunit from Delftia acidovorans (strain DSM 14801 / SPH-1).